Here is a 447-residue protein sequence, read N- to C-terminus: Tubulin beta chain (447 aa).

Residues glutamine 11, glutamate 69, serine 138, glycine 142, threonine 143, glycine 144, asparagine 204, and asparagine 226 each coordinate GTP. Glutamate 69 provides a ligand contact to Mg(2+). Residues 424–447 (QYQEASVSEGEEEYDEEAPLEGEE) form a disordered region. Residues 432–447 (EGEEEYDEEAPLEGEE) show a composition bias toward acidic residues.

The protein belongs to the tubulin family. In terms of assembly, dimer of alpha and beta chains. A typical microtubule is a hollow water-filled tube with an outer diameter of 25 nm and an inner diameter of 15 nM. Alpha-beta heterodimers associate head-to-tail to form protofilaments running lengthwise along the microtubule wall with the beta-tubulin subunit facing the microtubule plus end conferring a structural polarity. Microtubules usually have 13 protofilaments but different protofilament numbers can be found in some organisms and specialized cells. Requires Mg(2+) as cofactor.

Its subcellular location is the cytoplasm. The protein localises to the cytoskeleton. In terms of biological role, tubulin is the major constituent of microtubules, a cylinder consisting of laterally associated linear protofilaments composed of alpha- and beta-tubulin heterodimers. Microtubules grow by the addition of GTP-tubulin dimers to the microtubule end, where a stabilizing cap forms. Below the cap, tubulin dimers are in GDP-bound state, owing to GTPase activity of alpha-tubulin. The polypeptide is Tubulin beta chain (Venturia inaequalis (Apple scab fungus)).